The following is a 126-amino-acid chain: UPF0102 protein PMT_0624 (126 aa).

It belongs to the UPF0102 family.

The sequence is that of UPF0102 protein PMT_0624 from Prochlorococcus marinus (strain MIT 9313).